A 536-amino-acid chain; its full sequence is Octopamine receptor beta-2R (536 aa).

The disordered stretch occupies residues 1-26 (MLLCDGLGPEPPRQRHRNRTSAARIR). At 1 to 157 (MLLCDGLGPE…LDNIVWVFKA (157 aa)) the chain is on the extracellular side. Positions 14-26 (QRHRNRTSAARIR) are enriched in basic residues. Asn18, Asn92, Asn113, and Asn126 each carry an N-linked (GlcNAc...) asparagine glycan. A helical membrane pass occupies residues 158 to 178 (FVMLLIIIAAICGNLLVIISV). The Cytoplasmic segment spans residues 179 to 190 (MRVRKLRVITNY). A helical transmembrane segment spans residues 191 to 211 (FVVSLAMADIMVAIMAMTFNF). Residues 212–233 (SVQVTGRWNFSPFLCDLWNSLD) are Extracellular-facing. The chain crosses the membrane as a helical span at residues 234–256 (VYFSTASILHLCCISVDRYYAIV). The Cytoplasmic segment spans residues 257–270 (KPLKYPISMTKRVV). The chain crosses the membrane as a helical span at residues 271-291 (GIMLLNTWISPALLSFLPIFI). At 292–320 (GWYTTPQHQQFVIQNPTQCSFVVNKYYAV) the chain is on the extracellular side. A helical transmembrane segment spans residues 321-341 (ISSSISFWIPCTIMIFTYLAI). Topologically, residues 342-412 (FREANRQEKQ…MKREHKAART (71 aa)) are cytoplasmic. Residues 413–433 (LGIIMGTFILCWLPFFLWYTL) traverse the membrane as a helical segment. The Extracellular portion of the chain corresponds to 434-444 (SMTCEECQVPD). The chain crosses the membrane as a helical span at residues 445–465 (IVVSILFWIGYFNSTLNPLIY). Topologically, residues 466-536 (AYFNRDFREA…RRQSQMVDNL (71 aa)) are cytoplasmic.

Belongs to the G-protein coupled receptor 1 family. In the adult, expressed in the superior protocerebrum and the optic lobe medulla of the central nervous system, nurse cells of egg chambers in the ovary at oogenic stages 1-10, and spermatogonia and spermatocytes in the testis. Expressed in the oviduct epithelium. Also expressed in the spermatheca. Expressed in embryonic and larval ventral nerve cord and brain lobe, embryonic and larval salivary glands and larval imaginal disk and midgut. Also expressed in larval synaptic boutons.

The protein localises to the cell membrane. Functionally, autoreceptor for octopamine (OA), which is a neurotransmitter, neurohormone, and neuromodulator in invertebrates. Essential for ovulation and fertilization. During ovulation it mediates the OA-induced relaxation of the oviduct visceral muscles, by increasing cAMP levels and activating effectors such as calmodulin-dependent kinase II (CaMKII) and cAMP-dependent protein kinase A (PKA) pathways. Positively regulates synaptic growth; an action that is antagonized by Octbeta1R. This chain is Octopamine receptor beta-2R, found in Drosophila melanogaster (Fruit fly).